We begin with the raw amino-acid sequence, 320 residues long: Cytochrome f (320 aa).

The N-terminal stretch at 1–35 is a signal peptide; sequence MQNRNFNNLIIKWAIRLISIMIIINTIFWSSISEA. Heme contacts are provided by phenylalanine 36, cysteine 56, cysteine 59, and histidine 60. Residues 286–305 traverse the membrane as a helical segment; it reads IQGLLLFFGSVILAQIFLVL.

Belongs to the cytochrome f family. In terms of assembly, the 4 large subunits of the cytochrome b6-f complex are cytochrome b6, subunit IV (17 kDa polypeptide, petD), cytochrome f and the Rieske protein, while the 4 small subunits are PetG, PetL, PetM and PetN. The complex functions as a dimer. Requires heme as cofactor.

Its subcellular location is the plastid. The protein resides in the chloroplast thylakoid membrane. Its function is as follows. Component of the cytochrome b6-f complex, which mediates electron transfer between photosystem II (PSII) and photosystem I (PSI), cyclic electron flow around PSI, and state transitions. The protein is Cytochrome f (petA) of Marchantia polymorpha (Common liverwort).